Reading from the N-terminus, the 397-residue chain is Tryptophan synthase beta chain (397 aa).

The residue at position 88 (Lys-88) is an N6-(pyridoxal phosphate)lysine.

It belongs to the TrpB family. In terms of assembly, tetramer of two alpha and two beta chains. Pyridoxal 5'-phosphate is required as a cofactor.

It carries out the reaction (1S,2R)-1-C-(indol-3-yl)glycerol 3-phosphate + L-serine = D-glyceraldehyde 3-phosphate + L-tryptophan + H2O. It functions in the pathway amino-acid biosynthesis; L-tryptophan biosynthesis; L-tryptophan from chorismate: step 5/5. Its function is as follows. The beta subunit is responsible for the synthesis of L-tryptophan from indole and L-serine. This Haemophilus influenzae (strain PittEE) protein is Tryptophan synthase beta chain.